A 138-amino-acid chain; its full sequence is Large ribosomal subunit protein mL54 (138 aa).

A mitochondrion-targeting transit peptide spans 1-14 (MATKRLFGATRTWA).

It belongs to the mitochondrion-specific ribosomal protein mL54 family. Component of the mitochondrial large ribosomal subunit (mt-LSU). Mature mammalian 55S mitochondrial ribosomes consist of a small (28S) and a large (39S) subunit. The 28S small subunit contains a 12S ribosomal RNA (12S mt-rRNA) and 30 different proteins. The 39S large subunit contains a 16S rRNA (16S mt-rRNA), a copy of mitochondrial valine transfer RNA (mt-tRNA(Val)), which plays an integral structural role, and 52 different proteins.

The protein localises to the mitochondrion. This Homo sapiens (Human) protein is Large ribosomal subunit protein mL54 (MRPL54).